Here is a 47-residue protein sequence, read N- to C-terminus: MAHKCASAKLLSGIMALLFNGKSLLRPICLHVHNHLVSNSDTNIVWP.

The N-terminal stretch at methionine 1 to leucine 25 is a signal peptide.

This is an uncharacterized protein from Saccharomyces cerevisiae (strain ATCC 204508 / S288c) (Baker's yeast).